A 456-amino-acid chain; its full sequence is UDP-N-acetylmuramoylalanine--D-glutamate ligase (456 aa).

113-119 (GTNGKTT) serves as a coordination point for ATP.

The protein belongs to the MurCDEF family.

Its subcellular location is the cytoplasm. The enzyme catalyses UDP-N-acetyl-alpha-D-muramoyl-L-alanine + D-glutamate + ATP = UDP-N-acetyl-alpha-D-muramoyl-L-alanyl-D-glutamate + ADP + phosphate + H(+). It functions in the pathway cell wall biogenesis; peptidoglycan biosynthesis. Cell wall formation. Catalyzes the addition of glutamate to the nucleotide precursor UDP-N-acetylmuramoyl-L-alanine (UMA). The sequence is that of UDP-N-acetylmuramoylalanine--D-glutamate ligase from Rippkaea orientalis (strain PCC 8801 / RF-1) (Cyanothece sp. (strain PCC 8801)).